Reading from the N-terminus, the 260-residue chain is 2-amino-3,7-dideoxy-D-threo-hept-6-ulosonate synthase 1 (260 aa).

Catalysis depends on aspartate 26, which acts as the Proton acceptor. 1-deoxy-D-threo-hexo-2,5-diulose 6-phosphate is bound by residues 26–30 (DHGIT) and 144–146 (YPR). The active-site Proton donor is the tyrosine 144. Lysine 172 serves as the catalytic Schiff-base intermediate with substrate. Residues 194–195 (GG) and 221–222 (GR) each bind 1-deoxy-D-threo-hexo-2,5-diulose 6-phosphate.

It belongs to the DeoC/FbaB aldolase family. ADHS subfamily. Homodecamer.

It carries out the reaction 1-deoxy-D-threo-hexo-2,5-diulose 6-phosphate + L-aspartate 4-semialdehyde = 2,3-dioxopropyl phosphate + 2-amino-2,3,7-trideoxy-D-lyxo-hept-6-ulosonate. Catalyzes a transaldol reaction between 6-deoxy-5-ketofructose 1-phosphate (DKFP) and L-aspartate semialdehyde (ASA) with an elimination of hydroxypyruvaldehyde phosphate to yield 2-amino-3,7-dideoxy-D-threo-hept-6-ulosonate (ADH). Plays a key role in an alternative pathway of the biosynthesis of 3-dehydroquinate (DHQ), which is involved in the canonical pathway for the biosynthesis of aromatic amino acids. The chain is 2-amino-3,7-dideoxy-D-threo-hept-6-ulosonate synthase 1 from Archaeoglobus fulgidus (strain ATCC 49558 / DSM 4304 / JCM 9628 / NBRC 100126 / VC-16).